An 882-amino-acid polypeptide reads, in one-letter code: Valine--tRNA ligase (882 aa).

The 'HIGH' region signature appears at 48–58 (PNVTGKLHLGH). The 'KMSKS' region signature appears at 524–528 (KMSKS). Residue lysine 527 coordinates ATP. Residues 809-882 (LAELLDLDEE…KRLAELKAAR (74 aa)) are a coiled coil. The segment at 844-866 (GFTDRAPEKVVQEERDKQADYEQ) is disordered. Over residues 845-863 (FTDRAPEKVVQEERDKQAD) the composition is skewed to basic and acidic residues.

Belongs to the class-I aminoacyl-tRNA synthetase family. ValS type 1 subfamily. In terms of assembly, monomer.

It localises to the cytoplasm. The catalysed reaction is tRNA(Val) + L-valine + ATP = L-valyl-tRNA(Val) + AMP + diphosphate. Catalyzes the attachment of valine to tRNA(Val). As ValRS can inadvertently accommodate and process structurally similar amino acids such as threonine, to avoid such errors, it has a 'posttransfer' editing activity that hydrolyzes mischarged Thr-tRNA(Val) in a tRNA-dependent manner. The sequence is that of Valine--tRNA ligase from Latilactobacillus sakei subsp. sakei (strain 23K) (Lactobacillus sakei subsp. sakei).